We begin with the raw amino-acid sequence, 77 residues long: Small ribosomal subunit protein bS16c (77 aa).

Belongs to the bacterial ribosomal protein bS16 family.

It localises to the plastid. Its subcellular location is the chloroplast. The sequence is that of Small ribosomal subunit protein bS16c from Eucalyptus globulus subsp. globulus (Tasmanian blue gum).